Reading from the N-terminus, the 469-residue chain is Glutamine synthetase (469 aa).

In terms of domain architecture, GS beta-grasp spans 12–97; that stretch reads HDVKWVDLRF…LVCDIIEPST (86 aa). Residues 105-469 enclose the GS catalytic domain; that stretch reads PRNIAKRAEE…PLEYDLYYSV (365 aa). Residues glutamate 130 and glutamate 132 each coordinate Mg(2+). Glutamate 208 is a binding site for ATP. The Mg(2+) site is built by glutamate 213 and glutamate 221. L-glutamate contacts are provided by residues 265–266 and glycine 266; that span reads NG. Residue histidine 270 coordinates Mg(2+). ATP-binding positions include 272 to 274 and serine 274; that span reads HMS. Residues arginine 322, glutamate 328, and arginine 340 each coordinate L-glutamate. The ATP site is built by arginine 340, arginine 345, and lysine 353. Mg(2+) is bound at residue glutamate 358. Residue arginine 360 coordinates L-glutamate. Position 398 is an O-AMP-tyrosine (tyrosine 398).

It belongs to the glutamine synthetase family. In terms of assembly, oligomer of 12 subunits arranged in the form of two hexameric ring. Mg(2+) serves as cofactor.

It localises to the cytoplasm. The catalysed reaction is L-glutamate + NH4(+) + ATP = L-glutamine + ADP + phosphate + H(+). Its activity is regulated as follows. The activity of this enzyme could be controlled by adenylation under conditions of abundant glutamine. Functionally, catalyzes the ATP-dependent biosynthesis of glutamine from glutamate and ammonia. This is Glutamine synthetase from Pseudomonas aeruginosa (strain ATCC 15692 / DSM 22644 / CIP 104116 / JCM 14847 / LMG 12228 / 1C / PRS 101 / PAO1).